A 186-amino-acid chain; its full sequence is Ribosome-recycling factor (186 aa).

This sequence belongs to the RRF family.

It localises to the cytoplasm. In terms of biological role, responsible for the release of ribosomes from messenger RNA at the termination of protein biosynthesis. May increase the efficiency of translation by recycling ribosomes from one round of translation to another. This Bacteroides thetaiotaomicron (strain ATCC 29148 / DSM 2079 / JCM 5827 / CCUG 10774 / NCTC 10582 / VPI-5482 / E50) protein is Ribosome-recycling factor.